Reading from the N-terminus, the 343-residue chain is Geranylgeranyl pyrophosphate synthase 1 (343 aa).

Isopentenyl diphosphate-binding residues include Lys43, Arg46, and His75. Asp82 and Asp86 together coordinate Mg(2+). Residue Arg91 participates in dimethylallyl diphosphate binding. Position 92 (Arg92) interacts with isopentenyl diphosphate. 3 residues coordinate dimethylallyl diphosphate: Lys169, Thr170, and Gln212. Asp215 contacts Mg(2+). Dimethylallyl diphosphate is bound by residues Asn219, Lys229, and Lys239.

Belongs to the FPP/GGPP synthase family. Requires Mg(2+) as cofactor.

The enzyme catalyses isopentenyl diphosphate + dimethylallyl diphosphate = (2E)-geranyl diphosphate + diphosphate. It carries out the reaction isopentenyl diphosphate + (2E)-geranyl diphosphate = (2E,6E)-farnesyl diphosphate + diphosphate. It catalyses the reaction isopentenyl diphosphate + (2E,6E)-farnesyl diphosphate = (2E,6E,10E)-geranylgeranyl diphosphate + diphosphate. Its function is as follows. Geranylgeranyl pyrophosphate synthase; part of the gene cluster 4 that mediates the biosynthesis of an isoprenoid secondary metabolite. The polypeptide is Geranylgeranyl pyrophosphate synthase 1 (GGS1) (Zymoseptoria tritici (strain CBS 115943 / IPO323) (Speckled leaf blotch fungus)).